Here is a 398-residue protein sequence, read N- to C-terminus: Bifunctional enzyme IspD/IspF (398 aa).

A 2-C-methyl-D-erythritol 4-phosphate cytidylyltransferase region spans residues 1–234; it reads MANSRRTAAI…SRLAALLGDI (234 aa). The interval 235-398 is 2-C-methyl-D-erythritol 2,4-cyclodiphosphate synthase; the sequence is RTGTGYDVHA…LPWGPNGLSG (164 aa). A divalent metal cation is bound by residues Asp-241 and His-243. 4-CDP-2-C-methyl-D-erythritol 2-phosphate contacts are provided by residues 241–243 and 267–268; these read DVH and HS. His-275 is an a divalent metal cation binding site. 4-CDP-2-C-methyl-D-erythritol 2-phosphate contacts are provided by residues 289-291, 365-368, Phe-372, and Arg-375; these read DIG and TTSE.

It in the N-terminal section; belongs to the IspD/TarI cytidylyltransferase family. IspD subfamily. In the C-terminal section; belongs to the IspF family. It depends on a divalent metal cation as a cofactor.

It catalyses the reaction 2-C-methyl-D-erythritol 4-phosphate + CTP + H(+) = 4-CDP-2-C-methyl-D-erythritol + diphosphate. The catalysed reaction is 4-CDP-2-C-methyl-D-erythritol 2-phosphate = 2-C-methyl-D-erythritol 2,4-cyclic diphosphate + CMP. The protein operates within isoprenoid biosynthesis; isopentenyl diphosphate biosynthesis via DXP pathway; isopentenyl diphosphate from 1-deoxy-D-xylulose 5-phosphate: step 2/6. It participates in isoprenoid biosynthesis; isopentenyl diphosphate biosynthesis via DXP pathway; isopentenyl diphosphate from 1-deoxy-D-xylulose 5-phosphate: step 4/6. Its function is as follows. Bifunctional enzyme that catalyzes the formation of 4-diphosphocytidyl-2-C-methyl-D-erythritol from CTP and 2-C-methyl-D-erythritol 4-phosphate (MEP) (IspD), and catalyzes the conversion of 4-diphosphocytidyl-2-C-methyl-D-erythritol 2-phosphate (CDP-ME2P) to 2-C-methyl-D-erythritol 2,4-cyclodiphosphate (ME-CPP) with a corresponding release of cytidine 5-monophosphate (CMP) (IspF). The chain is Bifunctional enzyme IspD/IspF from Rhodopseudomonas palustris (strain BisA53).